A 51-amino-acid chain; its full sequence is Sperm protamine P1 (51 aa).

Belongs to the protamine P1 family. Testis.

It is found in the nucleus. The protein resides in the chromosome. In terms of biological role, protamines substitute for histones in the chromatin of sperm during the haploid phase of spermatogenesis. They compact sperm DNA into a highly condensed, stable and inactive complex. The polypeptide is Sperm protamine P1 (PRM1) (Trachypithecus cristatus (Silvered leaf-monkey)).